Reading from the N-terminus, the 223-residue chain is MAKLILATFAVVFMALAATSLAGDPDMLQDVCVADYKSLKGPLRLNGFPCKRIENVTANDFFFDGLMKAGNTGNAVGSVVTAASVESLPGLNTMGVSMARIDYAPWGLNPPHTHPRATEIIFVVEGSLDVGFVTTANKLFTRTVCKGEVFVFPRGLVHFQKNNGNTPAFAIAALNSQLPGTQSIAAALFGAAPPLPSDTLARAFQVDGGMVEFIKSKFVPPKY.

An N-terminal signal peptide occupies residues 1–22; that stretch reads MAKLILATFAVVFMALAATSLA. An intrachain disulfide couples cysteine 32 to cysteine 50. N-linked (GlcNAc...) asparagine glycosylation is present at asparagine 55. Residues 64 to 212 form the Cupin type-1 domain; that stretch reads DGLMKAGNTG…AFQVDGGMVE (149 aa). Residues histidine 112, histidine 114, glutamate 119, and histidine 158 each contribute to the Mn(2+) site.

The protein belongs to the germin family. As to quaternary structure, oligomer (believed to be a pentamer but probably hexamer).

It localises to the secreted. It is found in the extracellular space. Its subcellular location is the apoplast. Its function is as follows. May play a role in plant defense. Probably has no oxalate oxidase activity even if the active site is conserved. In Oryza sativa subsp. japonica (Rice), this protein is Germin-like protein 1-3 (GER8).